Reading from the N-terminus, the 177-residue chain is ATP synthase subunit b (177 aa).

A helical transmembrane segment spans residues 15–35 (GISGGTIIYQLLMFIILLALL).

The protein belongs to the ATPase B chain family. As to quaternary structure, F-type ATPases have 2 components, F(1) - the catalytic core - and F(0) - the membrane proton channel. F(1) has five subunits: alpha(3), beta(3), gamma(1), delta(1), epsilon(1). F(0) has three main subunits: a(1), b(2) and c(10-14). The alpha and beta chains form an alternating ring which encloses part of the gamma chain. F(1) is attached to F(0) by a central stalk formed by the gamma and epsilon chains, while a peripheral stalk is formed by the delta and b chains.

It localises to the cell membrane. In terms of biological role, f(1)F(0) ATP synthase produces ATP from ADP in the presence of a proton or sodium gradient. F-type ATPases consist of two structural domains, F(1) containing the extramembraneous catalytic core and F(0) containing the membrane proton channel, linked together by a central stalk and a peripheral stalk. During catalysis, ATP synthesis in the catalytic domain of F(1) is coupled via a rotary mechanism of the central stalk subunits to proton translocation. Functionally, component of the F(0) channel, it forms part of the peripheral stalk, linking F(1) to F(0). The protein is ATP synthase subunit b of Geobacillus kaustophilus (strain HTA426).